Consider the following 782-residue polypeptide: MGSDWDEIKRLAADFQKAQLTSTLQKLSERNCVEIVTLLLEKQMLEVVFTNDGKEYITPDHLEREIQDELYVNGGRANLVEVSKTLNVDLSRIEVLAERIAAENPSVHLVLGQLIDEDYISHIAQEINEKLVQRGEISISELASQFDLPSDFLQHDVVEKHLGKIIKGRQDASNPRVFFTQAYIQRCKAKIRGALAAITRPINVAVILQQIGVQEKIFHSLLDEIAPAGQVTSKQANSQYVPHIYAKTQADWVNSFYKQNSFLEYDAIQKLGISDAKSYIRKQFPNEEFLFLKRVALGARLVELTVVTALNECSATKQYLDLTTILPSNLSEEDIEEVFSTIMAQKHSNPSNFVYLDGIVFSQPYLAQLVQPCQALAESQAKAAIDGGVYQQYIVEKTLAQKGNVSTQELEDDGKVDKRDERRKKASSGKAGGGAQGRETKTKSTKKHQRGKAAAQFDSDDEDDVQQGTRGGGGASKKAVKPLELVKTADIVKLITASLEEEGLEHLSKPIAALYTNQFNQTALARAQELFEATPQTNRRQTHAAIQDRINTLLIDIRLYEKGLKLFPQDTQTQLVKYLLKSLGNEICNELSLYVASECNLTVKNTNLNVDQRNKLAQECEAQYRAALLEQNKALNKSIDEFELATETVLKTCSMIIKKVDKKKDRLLIADHKRKLQKQLLECHEPALLLHLAALILFTTITGSILHASGKFVSAILQHIRGSLNEEQNALLLRYHDLVLQVLQATPDSNESKLANEHLQAMQTQVVELAQNFSRASVSKAD.

Residues 405–478 (VSTQELEDDG…TRGGGGASKK (74 aa)) are disordered.

Belongs to the UFL1 family.

In terms of biological role, E3 UFM1-protein ligase that mediates ufmylation of target proteins. The sequence is that of E3 UFM1-protein ligase 1 homolog from Drosophila simulans (Fruit fly).